The following is a 315-amino-acid chain: Nucleotide-binding protein CGSHiEE_06315 (315 aa).

Position 8-15 (8-15 (GRSGAGKS)) interacts with ATP. Residue 56-59 (DIRN) participates in GTP binding.

Belongs to the RapZ-like family.

Displays ATPase and GTPase activities. This chain is Nucleotide-binding protein CGSHiEE_06315, found in Haemophilus influenzae (strain PittEE).